A 551-amino-acid polypeptide reads, in one-letter code: Colicin E3 (551 aa).

Disordered regions lie at residues 1–74, 243–269, and 293–320; these read MSGG…SGGG, TLSP…NTRD, and PDQV…EAAE. The segment at 1–315 is translocation (T) domain; that stretch reads MSGGDGRGHN…RQQEWDATHP (315 aa). Over residues 20–35 the composition is skewed to gly residues; sequence INGGPTGLGVGGGASD. The Binds to TolB signature appears at 35–39; that stretch reads DGSGW. Residues 36-45 show a composition bias toward low complexity; that stretch reads GSGWSSENNP. Residues 46-74 show a composition bias toward gly residues; the sequence is WGGGSGSGIHWGGGSGHGNGGGNGNSGGG. Basic and acidic residues predominate over residues 296-320; it reads VKQRQDEENRRQQEWDATHPVEAAE. A coiled-coil region spans residues 316–378; that stretch reads VEAAERNYER…IAEIKQFNRF (63 aa). The receptor-binding (R) domain stretch occupies residues 316–450; sequence VEAAERNYER…SAENNLNDEK (135 aa). The Hairpin motif lies at 379-385; sequence AHDPMAG. Residues 386–450 are a coiled coil; the sequence is GHRMWQMAGL…SAENNLNDEK (65 aa). The tract at residues 406–505 is disordered; that stretch reads NKQAAFDAAA…KRWTGDKGRK (100 aa). The span at 430–472 shows a compositional bias: basic and acidic residues; that stretch reads ESRKKKEDKKRSAENNLNDEKNKPRKGFKDYGHDYHPAPKTEN. Residues 451–456 form a linker region; the sequence is NKPRKG. Residues 455-551 are ribosome inactivating activity; that stretch reads KGFKDYGHDY…DPKRNIKKYL (97 aa). Residues 457–551 are cytotoxic RNase (C) domain; sequence FKDYGHDYHP…DPKRNIKKYL (95 aa). The Proton donor role is filled by histidine 513. The active-site Proton acceptor is glutamate 517. The interval 517–551 is disordered; sequence EGYRASDGQHLGSFDPKTGNQLKGPDPKRNIKKYL. Positions 530 to 551 are binding of immunity protein; the sequence is FDPKTGNQLKGPDPKRNIKKYL. Arginine 545 is a catalytic residue.

The protein belongs to the cloacin colicin family. Native colicin E3 is a 1:1 complex of A chain and protein B (cognate immunity protein, Im3); protein A is 1,000-fold more active in inactivating ribosomes than the native complex. The cytotoxic fragment (residues 456-551, C95) forms a 1:1 complex with Im3. The receptor-binding (R) domain binds obliquely to its receptor BtuB without displacing BtuB's central plug; binding unfolds the R domain. The N-terminal 83 residues (T83) bind OmpF; trimeric complexes with colicin E3, BtuB and OmpF can be cross-linked and immunoprecipitated. Probably inserts into the OmpF pore as an unfolded peptide and spans the OmpF pore. In a complex with T.thermophilus 70S ribosomes, cytotoxic fragment C96 contacts 16S rRNA, 23S rRNA, mRNA, P-site tRNA and ribosomal protein uS12.

It localises to the secreted. Its function is as follows. Colicins are polypeptide toxins produced by and active against E.coli and closely related bacteria. Cleaves 16S rRNA between adenosine-1492 and guanosine-1493 (E.coli 16S rRNA numbering), releasing a 49 nucleotide (nt) 'colicin' fragment. Inactivates 70S ribosomes or 30S subunits by endonucleolytically cleaving 16S RNA at a specific site about 50 nt from its C-terminus. Produces 5'-OH-guanosine and a 2',3'-cyclic phosphate adenosine. Mixing a susceptible (e.g. strain K12 / A19) and colicin E3 producing strain results in total protein translation inhibition within 11 minutes. Its activity is inhibited by cognate immunity protein Im3. In terms of biological role, uses BtuB, the vitamin B transporter, as a receptor on the outer membrane; binds via the receptor (R) domain. Then the translocation domain (T) probably 'fishes' for its outer membrane translocon protein, OmpF. The N-terminal 83 residues (T83) can bind to and occlude OmpF channels. A complex of the cytotoxic C-terminal 96 residues (C96) plus the immunity protein does not occlude OmpF; upon complex separation from the immunity protein C96 becomes disordered and is able to bind OmpF. The N-terminus probably binds TolB and then reinserts into an empty pore of trimeric OmpF; the rest of the protein is pulled through OmpF and crosses the inner membrane, where the cytotoxic fragment is probably released by protease FtsH. The sequence is that of Colicin E3 (ceaC) from Escherichia coli.